Reading from the N-terminus, the 215-residue chain is MSEAKRLAAEKAIDYVEDGMIVGVGTGSTVAYFIDALGHIGHRIKGAVSSSEQSTARLRQHGIEVLDLNHTGNLSLYVDGADECDPNRCLIKGGGAALTREKIIAEASERFICIVDPSKQVPVLGKFPLPVEVIPMARSLVARQILALTGGQPVWRDGVVTDNGNVVLDVHNLQITDPVALERSLNQIPGVVCVGLFARRPADVVIVGGEPPRVL.

Substrate is bound by residues 26–29 (TGST), 79–82 (DGAD), and 92–95 (KGGG). Residue E101 is the Proton acceptor of the active site. Residue K119 participates in substrate binding.

The protein belongs to the ribose 5-phosphate isomerase family. As to quaternary structure, homodimer.

It catalyses the reaction aldehydo-D-ribose 5-phosphate = D-ribulose 5-phosphate. Its pathway is carbohydrate degradation; pentose phosphate pathway; D-ribose 5-phosphate from D-ribulose 5-phosphate (non-oxidative stage): step 1/1. Catalyzes the reversible conversion of ribose-5-phosphate to ribulose 5-phosphate. The polypeptide is Ribose-5-phosphate isomerase A (Xanthomonas oryzae pv. oryzae (strain MAFF 311018)).